Here is a 227-residue protein sequence, read N- to C-terminus: GTPase ERas (227 aa).

Over residues Met-1–Thr-19 the composition is skewed to polar residues. The tract at residues Met-1 to Ser-25 is disordered. Gly-48–Ser-55 is a binding site for GTP. The Effector region signature appears at His-70–Tyr-78. Residues Asp-95 to Gln-99 and Asn-151 to Asp-154 each bind GTP. S-palmitoyl cysteine attachment occurs at residues Cys-220 and Cys-222. Position 224 is a cysteine methyl ester (Cys-224). The S-farnesyl cysteine moiety is linked to residue Cys-224. A propeptide spans Ser-225–Ala-227 (removed in mature form).

This sequence belongs to the small GTPase superfamily. Ras family. In terms of assembly, interacts with PIK3CD. In terms of tissue distribution, expressed in several undifferentiated mouse embryonic stem cell lines.

Its subcellular location is the cell membrane. The enzyme catalyses GTP + H2O = GDP + phosphate + H(+). Its activity is regulated as follows. Alternates between an inactive form bound to GDP and an active form bound to GTP. Activated by a guanine nucleotide-exchange factor (GEF) and inactivated by a GTPase-activating protein (GAP). In terms of biological role, ras proteins bind GDP/GTP and possess intrinsic GTPase activity. Plays an important role in the tumor-like growth properties of embryonic stem cells. The chain is GTPase ERas (Eras) from Mus musculus (Mouse).